We begin with the raw amino-acid sequence, 910 residues long: Constitutive coactivator of peroxisome proliferator-activated receptor gamma (910 aa).

Disordered regions lie at residues 333–416 (SDAE…VPMC), 443–483 (SEPR…ESRQ), and 863–910 (SHHA…WRRY). Basic and acidic residues-rich tracts occupy residues 335–351 (AESR…ESRQ), 360–375 (ESRR…EPRQ), and 396–411 (ESRR…EPRQ). Residues 872 to 890 (QGSSYHRTGSGYSRSSQGQ) are compositionally biased toward polar residues. Arg-885 carries the post-translational modification Omega-N-methylarginine. Residues 901–910 (QYEHDQWRRY) are compositionally biased toward basic and acidic residues.

This sequence belongs to the constitutive coactivator of PPAR-gamma family. Interacts with ESR1 and RXRA. Interacts with PPARG; in a ligand-independent manner. In terms of tissue distribution, widely expressed.

The protein resides in the nucleus. Functionally, functions as a transactivator of PPARG and ESR1. Functions in adipogenesis through PPARG activation. The protein is Constitutive coactivator of peroxisome proliferator-activated receptor gamma (FAM120B) of Homo sapiens (Human).